The sequence spans 484 residues: Probable metalloprotease ARX1 (484 aa).

It belongs to the peptidase M24 family. As to quaternary structure, component of the nucleoplasmic and cytoplasmic pre-60S ribosomal particles.

The protein localises to the cytoplasm. The protein resides in the nucleus. Functionally, probable metalloprotease involved in proper assembly of pre-ribosomal particles during the biogenesis of the 60S ribosomal subunit. Accompanies the pre-60S particles to the cytoplasm. This chain is Probable metalloprotease ARX1 (ARX1), found in Yarrowia lipolytica (strain CLIB 122 / E 150) (Yeast).